Here is a 692-residue protein sequence, read N- to C-terminus: Elongation factor G (692 aa).

Residues 8–283 (NRIRNIGIAA…AVIDYLPAPT (276 aa)) form the tr-type G domain. GTP is bound by residues 17-24 (AHIDAGKT), 81-85 (DTPGH), and 135-138 (NKMD).

This sequence belongs to the TRAFAC class translation factor GTPase superfamily. Classic translation factor GTPase family. EF-G/EF-2 subfamily.

Its subcellular location is the cytoplasm. In terms of biological role, catalyzes the GTP-dependent ribosomal translocation step during translation elongation. During this step, the ribosome changes from the pre-translocational (PRE) to the post-translocational (POST) state as the newly formed A-site-bound peptidyl-tRNA and P-site-bound deacylated tRNA move to the P and E sites, respectively. Catalyzes the coordinated movement of the two tRNA molecules, the mRNA and conformational changes in the ribosome. This is Elongation factor G (fusA) from Helicobacter pylori (strain ATCC 700392 / 26695) (Campylobacter pylori).